The sequence spans 594 residues: Neopentalenolactone D synthase (594 aa).

FAD-binding positions include 64-65 (IG), 86-87 (DK), 94-95 (TW), 106-107 (DV), Tyr-112, Val-156, and Met-494.

It belongs to the FAD-binding monooxygenase family. It depends on FAD as a cofactor.

The catalysed reaction is 1-deoxy-11-oxopentalenate + NADPH + O2 + H(+) = neopentalenolactone D + NADP(+) + H2O. The protein operates within antibiotic biosynthesis; neopentalenolactone biosynthesis. In terms of biological role, catalyzes the flavin-dependent Baeyer-Villiger oxidation of 1-deoxy-11-oxopentalenic acid to neopentalenolactone D in the biosynthesis of neopentalenolactone antibiotic. The polypeptide is Neopentalenolactone D synthase (ptlE) (Streptomyces avermitilis (strain ATCC 31267 / DSM 46492 / JCM 5070 / NBRC 14893 / NCIMB 12804 / NRRL 8165 / MA-4680)).